The primary structure comprises 198 residues: Acireductone dioxygenase (198 aa).

Fe(2+)-binding residues include histidine 97, histidine 99, glutamate 103, and histidine 141. The Ni(2+) site is built by histidine 97, histidine 99, glutamate 103, and histidine 141.

It belongs to the acireductone dioxygenase (ARD) family. Monomer. Fe(2+) serves as cofactor. Ni(2+) is required as a cofactor.

The enzyme catalyses 1,2-dihydroxy-5-(methylsulfanyl)pent-1-en-3-one + O2 = 3-(methylsulfanyl)propanoate + CO + formate + 2 H(+). It catalyses the reaction 1,2-dihydroxy-5-(methylsulfanyl)pent-1-en-3-one + O2 = 4-methylsulfanyl-2-oxobutanoate + formate + 2 H(+). It participates in amino-acid biosynthesis; L-methionine biosynthesis via salvage pathway; L-methionine from S-methyl-5-thio-alpha-D-ribose 1-phosphate: step 5/6. Functionally, catalyzes 2 different reactions between oxygen and the acireductone 1,2-dihydroxy-3-keto-5-methylthiopentene (DHK-MTPene) depending upon the metal bound in the active site. Fe-containing acireductone dioxygenase (Fe-ARD) produces formate and 2-keto-4-methylthiobutyrate (KMTB), the alpha-ketoacid precursor of methionine in the methionine recycle pathway. Ni-containing acireductone dioxygenase (Ni-ARD) produces methylthiopropionate, carbon monoxide and formate, and does not lie on the methionine recycle pathway. The protein is Acireductone dioxygenase of Synechococcus elongatus (strain ATCC 33912 / PCC 7942 / FACHB-805) (Anacystis nidulans R2).